The primary structure comprises 448 residues: Beclin-1 (448 aa).

Methionine 1 carries the N-acetylmethionine modification. Serine 14 and serine 29 each carry phosphoserine. The tract at residues threonine 47 to glutamate 66 is disordered. A phosphoserine; by AMPK mark is found at serine 88, serine 91, and serine 94. Residues threonine 106–serine 125 carry the BH3 motif. The segment at leucine 110–cysteine 157 is interaction with BCL2 and BCL2L1 isoform Bcl-X(L). Threonine 117 carries the post-translational modification Phosphothreonine; by DAPK1. Positions aspartate 140–phenylalanine 268 form a coiled coil. The evolutionary conserved domain (ECD) stretch occupies residues aspartate 243–lysine 448. Glycyl lysine isopeptide (Lys-Gly) (interchain with G-Cter in ubiquitin) cross-links involve residues lysine 400 and lysine 435. The interval tryptophan 423 to lysine 448 is required for membrane-association.

It belongs to the beclin family. A homodimeric form is proposed to exist; this metastable form readily transits to ATG14- or UVRAG-containing complexes with BECN1:UVRAG being more stable than BECN1:ATG14. Component of the PI3K (PI3KC3/PI3K-III/class III phosphatidylinositol 3-kinase) complex whose core is composed of the catalytic subunit PIK3C3, the regulatory subunit PIK3R4 and BECN1, and associates with additional regulatory/auxiliary subunits to form alternative complex forms. Accepted alternative complex forms containing a fourth regulatory subunit in a mutually exclusive manner are PI3K complex I (PI3KC3-C1) containing ATG14, and PI3K complex II (PI3KC3-C2) containing UVRAG. PI3KC3-C1 displays a V-shaped architecture with PIK3R4 serving as a bridge between PIK3C3 and the ATG14:BECN1 subcomplex. Both, PI3KC3-C1 and PI3KC3-C2, can associate with further regulatory subunits, such as RUBCN, SH3GLB1/Bif-1 and AMBRA1. PI3KC3-C1 probably associates with PIK3CB. Forms a complex with PPP2CA and AMBRA1; AMBRA1 and BECN1 components of the complex regulate MYC stability via different pathways. Component of the complex, at least composed of LRPPRC, BECN1 and BCL2; the interactions prevent BECN1 from forming an autophagy-inducing complex with PIK3C3. Interacts with AMBRA1, GOPC, GRID2 and PIK3CB. Interacts with BCL2 and BCL2L1 isoform Bcl-X(L); the interaction inhibits BECN1 function in promoting autophagy by interfering with the formation of the PI3K complex. Interacts with cytosolic HMGB1; inhibits the interaction of BECN1 and BCL2 leading to promotion of autophagy. Interacts with USP10, USP13, VMP1, DAPK1. Interacts with the poly-Gln domain of ATXN3; the interaction causes deubiquitination at Lys-400 and stabilizes BECN1. Interacts with SLAMF1. Interacts with TRIM5; the interaction causes activation of BECN1 by causing its dissociation from its inhibitors BCL2 and TAB2. Interacts with active ULK1 (phosphorylated on 'Ser-317') and MEFV simultaneously. Interacts with TRIM50. Interacts with TRIM16. Interacts with WDR81 and WDR91; negatively regulates the PI3 kinase/PI3K activity associated with endosomal membranes. Interacts with LAPTM4B; competes with EGFR for LAPTM4B binding; regulates EGFR activity. Interacts with ATG14; this interaction is increased in the absence of TMEM39A. Interacts with WASHC1; preventing interaction with AMBRA1 and the DCX(AMBRA1) complex and subsequent ubiquitination. Interacts with TRIM17. Interacts with BCL2L10/BCL-B (via BH1 domain). Interacts with SH3BGRL. Interacts with Irgm1; enhancing BECN1-interacting partners and influencing the composition of the BECN1 complex. Interacts with ARMC3. Interacts with LRPPRC. In terms of assembly, (Microbial infection) Interacts with murine gammaherpesvirus 68 M11; the viral protein binds BECN1 with higher affinity than cellular BCL2. In terms of processing, phosphorylation at Thr-117 by DAPK1 reduces its interaction with BCL2 and BCL2L1 and promotes induction of autophagy. In response to autophagic stimuli, phosphorylated at serine residues by AMPK in an ATG14-dependent manner, and this phosphorylation is critical for maximally efficient autophagy. Post-translationally, polyubiquitinated by NEDD4, both with 'Lys-11'- and 'Lys-63'-linkages. 'Lys-11'-linked polyubiquitination leads to degradation and is enhanced when the stabilizing interaction partner VPS34 is depleted. Deubiquitinated by USP10 and USP13, leading to stabilize the PIK3C3/VPS34-containing complexes. Polyubiquitinated at Lys-400 with 'Lys-48'-linkages. 'Lys-48'-linked poyubiquitination of Lys-400 leads to degradation. Deubiquitinated by ATXN3, leading to stabilization. Ubiquitinated at Lys-435 via 'Lys-63'-linkage by the DCX(AMBRA1) complex, thereby increasing the association between BECN1 and PIK3C3 to promote PIK3C3 activity. 'Lys-48'-linked ubiquitination by RNF216 leads to proteasomal degradation and autophagy inhibition. Proteolytically processed by caspases including CASP8 and CASP3; the C-terminal fragments lack autophagy-inducing capacity and are proposed to induce apoptosis. Thus the cleavage is proposed to be an determinant to switch from autophagy to apoptosis pathways affecting cellular homeostasis including viral infections and survival of tumor cells.

The protein resides in the cytoplasm. The protein localises to the golgi apparatus. Its subcellular location is the trans-Golgi network membrane. It is found in the endosome membrane. It localises to the endoplasmic reticulum membrane. The protein resides in the mitochondrion membrane. The protein localises to the endosome. Its subcellular location is the cytoplasmic vesicle. It is found in the autophagosome. It localises to the mitochondrion. The protein resides in the nucleus. Plays a central role in autophagy. Acts as a core subunit of different PI3K complex forms that mediate formation of phosphatidylinositol 3-phosphate and are believed to play a role in multiple membrane trafficking pathways: PI3KC3-C1 is involved in initiation of autophagosomes and PI3KC3-C2 in maturation of autophagosomes and endocytosis. Involved in regulation of degradative endocytic trafficking and required for the abscission step in cytokinesis, probably in the context of PI3KC3-C2. Essential for the formation of PI3KC3-C2 but not PI3KC3-C1 PI3K complex forms. Involved in endocytosis including endosome formation in neuronal cells. May play a role in antiviral host defense. In terms of biological role, beclin-1-C 35 kDa localized to mitochondria can promote apoptosis; it induces the mitochondrial translocation of BAX and the release of proapoptotic factors. The chain is Beclin-1 (Becn1) from Mus musculus (Mouse).